A 251-amino-acid polypeptide reads, in one-letter code: Probable transcriptional regulatory protein MRA_2631 (251 aa).

The protein belongs to the TACO1 family.

Its subcellular location is the cytoplasm. This Mycobacterium tuberculosis (strain ATCC 25177 / H37Ra) protein is Probable transcriptional regulatory protein MRA_2631.